A 356-amino-acid chain; its full sequence is Methionine import ATP-binding protein MetN (356 aa).

Positions 7-250 (IKLDNIDVTF…PRESLTQDFI (244 aa)) constitute an ABC transporter domain. An ATP-binding site is contributed by 43-50 (GYSGAGKS).

Belongs to the ABC transporter superfamily. Methionine importer (TC 3.A.1.24) family. The complex is composed of two ATP-binding proteins (MetN), two transmembrane proteins (MetI) and a solute-binding protein (MetQ).

Its subcellular location is the cell membrane. It catalyses the reaction L-methionine(out) + ATP + H2O = L-methionine(in) + ADP + phosphate + H(+). The enzyme catalyses D-methionine(out) + ATP + H2O = D-methionine(in) + ADP + phosphate + H(+). Functionally, part of the ABC transporter complex MetNIQ involved in methionine import. Responsible for energy coupling to the transport system. This Streptococcus agalactiae serotype Ia (strain ATCC 27591 / A909 / CDC SS700) protein is Methionine import ATP-binding protein MetN.